We begin with the raw amino-acid sequence, 377 residues long: 4-hydroxy-3-methylbut-2-en-1-yl diphosphate synthase (flavodoxin) (377 aa).

[4Fe-4S] cluster-binding residues include Cys270, Cys273, Cys305, and Glu312.

The protein belongs to the IspG family. The cofactor is [4Fe-4S] cluster.

The catalysed reaction is (2E)-4-hydroxy-3-methylbut-2-enyl diphosphate + oxidized [flavodoxin] + H2O + 2 H(+) = 2-C-methyl-D-erythritol 2,4-cyclic diphosphate + reduced [flavodoxin]. It functions in the pathway isoprenoid biosynthesis; isopentenyl diphosphate biosynthesis via DXP pathway; isopentenyl diphosphate from 1-deoxy-D-xylulose 5-phosphate: step 5/6. Its function is as follows. Converts 2C-methyl-D-erythritol 2,4-cyclodiphosphate (ME-2,4cPP) into 1-hydroxy-2-methyl-2-(E)-butenyl 4-diphosphate. The protein is 4-hydroxy-3-methylbut-2-en-1-yl diphosphate synthase (flavodoxin) of Bacillus subtilis (strain 168).